We begin with the raw amino-acid sequence, 129 residues long: MATIYATGKRKAAIAKVWLTPGNGEMLINGKTLDQWLGGHETLKMKVRLPLEATKQLESMNVKATTLGGGYSAQADALKHGITKALVEFEPSFRAILKPMGLLTRDSRVVERKKPGKKKARRSPQFSKR.

The interval 107–129 (SRVVERKKPGKKKARRSPQFSKR) is disordered. Residues 114 to 129 (KPGKKKARRSPQFSKR) show a composition bias toward basic residues.

It belongs to the universal ribosomal protein uS9 family.

This is Small ribosomal subunit protein uS9 from Sulfurovum sp. (strain NBC37-1).